A 130-amino-acid polypeptide reads, in one-letter code: Small ribosomal subunit protein uS9 (130 aa).

Positions 111 to 130 are disordered; it reads VERKKPGLKKARKASQFSKR. Residues 116-130 show a composition bias toward basic residues; that stretch reads PGLKKARKASQFSKR.

It belongs to the universal ribosomal protein uS9 family.

This chain is Small ribosomal subunit protein uS9, found in Lactococcus lactis subsp. lactis (strain IL1403) (Streptococcus lactis).